Consider the following 443-residue polypeptide: Oxygen-dependent coproporphyrinogen-III oxidase, mitochondrial (443 aa).

Residues Met1 to Arg98 constitute a mitochondrion transit peptide. The segment at Met90 to Glu111 is disordered. Residue Ser101 is modified to Phosphoserine. The tract at residues Val182 to Lys191 is important for dimerization. Ser233 provides a ligand contact to coproporphyrinogen III. Catalysis depends on His247, which acts as the Proton donor. Asn249–Arg251 is a binding site for coproporphyrinogen III. The important for dimerization stretch occupies residues Tyr381 to Glu417. Lys393 bears the N6-acetyllysine; alternate mark. Position 393 is an N6-succinyllysine; alternate (Lys393). Residue Gly400 to Arg402 participates in coproporphyrinogen III binding.

The protein belongs to the aerobic coproporphyrinogen-III oxidase family. In terms of assembly, homodimer.

Its subcellular location is the mitochondrion intermembrane space. It catalyses the reaction coproporphyrinogen III + O2 + 2 H(+) = protoporphyrinogen IX + 2 CO2 + 2 H2O. Its pathway is porphyrin-containing compound metabolism; protoporphyrin-IX biosynthesis; protoporphyrinogen-IX from coproporphyrinogen-III (O2 route): step 1/1. Its function is as follows. Involved in the heme biosynthesis. Catalyzes the aerobic oxidative decarboxylation of propionate groups of rings A and B of coproporphyrinogen-III to yield the vinyl groups in protoporphyrinogen-IX. The protein is Oxygen-dependent coproporphyrinogen-III oxidase, mitochondrial of Rattus norvegicus (Rat).